We begin with the raw amino-acid sequence, 330 residues long: Aspartate--ammonia ligase (330 aa).

This sequence belongs to the class-II aminoacyl-tRNA synthetase family. AsnA subfamily.

It is found in the cytoplasm. The enzyme catalyses L-aspartate + NH4(+) + ATP = L-asparagine + AMP + diphosphate + H(+). It functions in the pathway amino-acid biosynthesis; L-asparagine biosynthesis; L-asparagine from L-aspartate (ammonia route): step 1/1. This is Aspartate--ammonia ligase from Klebsiella pneumoniae (strain 342).